Consider the following 217-residue polypeptide: N-(5'-phosphoribosyl)anthranilate isomerase (217 aa).

It belongs to the TrpF family.

It carries out the reaction N-(5-phospho-beta-D-ribosyl)anthranilate = 1-(2-carboxyphenylamino)-1-deoxy-D-ribulose 5-phosphate. Its pathway is amino-acid biosynthesis; L-tryptophan biosynthesis; L-tryptophan from chorismate: step 3/5. This chain is N-(5'-phosphoribosyl)anthranilate isomerase, found in Chlorobium chlorochromatii (strain CaD3).